A 436-amino-acid chain; its full sequence is 3-ketoacyl-CoA thiolase (436 aa).

Residue cysteine 99 is the Acyl-thioester intermediate of the active site. Residues histidine 392 and cysteine 422 each act as proton acceptor in the active site.

The protein belongs to the thiolase-like superfamily. Thiolase family. Heterotetramer of two alpha chains (FadJ) and two beta chains (FadI).

Its subcellular location is the cytoplasm. It carries out the reaction an acyl-CoA + acetyl-CoA = a 3-oxoacyl-CoA + CoA. The protein operates within lipid metabolism; fatty acid beta-oxidation. Functionally, catalyzes the final step of fatty acid oxidation in which acetyl-CoA is released and the CoA ester of a fatty acid two carbons shorter is formed. This Shewanella baltica (strain OS185) protein is 3-ketoacyl-CoA thiolase.